Reading from the N-terminus, the 414-residue chain is Peptidoglycan beta-N-acetylmuramidase NamZ (414 aa).

The first 23 residues, 1–23 (MRKTIFAFLTGLMMFGTITAASA), serve as a signal peptide directing secretion.

The protein belongs to the glycoside hydrolase 171 family. Homodimer in solution.

Its subcellular location is the secreted. The enzyme catalyses Hydrolysis of terminal, non-reducing N-acetylmuramic residues.. Functionally, catalyzes the exo-lytic cleavage of beta-1,4-N-acetylmuramate (beta-1,4-MurNAc) from the non-reducing ends of peptidoglycan chains. Specifically hydrolyzes the natural, peptidoglycan-derived disaccharide MurNAc-GlcNAc and the artificial substrate para-nitrophenyl beta-N-acetylmuramic acid (pNP-MurNAc). Requires a MurNAc entity at the non-reducing end, and cannot cleave GlcNAc-MurNAc. Probably plays a role in cell wall turnover and recycling. In Bacillus subtilis (strain 168), this protein is Peptidoglycan beta-N-acetylmuramidase NamZ.